Here is an 869-residue protein sequence, read N- to C-terminus: Protein translocase subunit SecA (869 aa).

ATP-binding positions include Gln-85, 103–107, and Asp-508; that span reads GEGKT.

The protein belongs to the SecA family. Monomer and homodimer. Part of the essential Sec protein translocation apparatus which comprises SecA, SecYEG and auxiliary proteins SecDF. Other proteins may also be involved.

It localises to the cell membrane. The protein localises to the cytoplasm. The catalysed reaction is ATP + H2O + cellular proteinSide 1 = ADP + phosphate + cellular proteinSide 2.. Part of the Sec protein translocase complex. Interacts with the SecYEG preprotein conducting channel. Has a central role in coupling the hydrolysis of ATP to the transfer of proteins into and across the cell membrane, serving as an ATP-driven molecular motor driving the stepwise translocation of polypeptide chains across the membrane. This is Protein translocase subunit SecA from Deinococcus deserti (strain DSM 17065 / CIP 109153 / LMG 22923 / VCD115).